Consider the following 653-residue polypeptide: tRNA 5-methylaminomethyl-2-thiouridine biosynthesis bifunctional protein MnmC (653 aa).

Positions 1 to 236 are tRNA (mnm(5)s(2)U34)-methyltransferase; it reads MPDRLVPATL…KFAMLVGEYA (236 aa). Positions 260–653 are FAD-dependent cmnm(5)s(2)U34 oxidoreductase; sequence IGAGLAGCAL…IRALRGRKLG (394 aa).

It in the N-terminal section; belongs to the methyltransferase superfamily. tRNA (mnm(5)s(2)U34)-methyltransferase family. The protein in the C-terminal section; belongs to the DAO family. FAD serves as cofactor.

It localises to the cytoplasm. The enzyme catalyses 5-aminomethyl-2-thiouridine(34) in tRNA + S-adenosyl-L-methionine = 5-methylaminomethyl-2-thiouridine(34) in tRNA + S-adenosyl-L-homocysteine + H(+). Catalyzes the last two steps in the biosynthesis of 5-methylaminomethyl-2-thiouridine (mnm(5)s(2)U) at the wobble position (U34) in tRNA. Catalyzes the FAD-dependent demodification of cmnm(5)s(2)U34 to nm(5)s(2)U34, followed by the transfer of a methyl group from S-adenosyl-L-methionine to nm(5)s(2)U34, to form mnm(5)s(2)U34. The protein is tRNA 5-methylaminomethyl-2-thiouridine biosynthesis bifunctional protein MnmC of Burkholderia vietnamiensis (strain G4 / LMG 22486) (Burkholderia cepacia (strain R1808)).